A 532-amino-acid polypeptide reads, in one-letter code: Bifunctional purine biosynthesis protein PurH (532 aa).

One can recognise an MGS-like domain in the interval 1–148 (MQTPKPIKRA…KNHKDVTIVV (148 aa)).

Belongs to the PurH family.

It carries out the reaction (6R)-10-formyltetrahydrofolate + 5-amino-1-(5-phospho-beta-D-ribosyl)imidazole-4-carboxamide = 5-formamido-1-(5-phospho-D-ribosyl)imidazole-4-carboxamide + (6S)-5,6,7,8-tetrahydrofolate. It catalyses the reaction IMP + H2O = 5-formamido-1-(5-phospho-D-ribosyl)imidazole-4-carboxamide. It functions in the pathway purine metabolism; IMP biosynthesis via de novo pathway; 5-formamido-1-(5-phospho-D-ribosyl)imidazole-4-carboxamide from 5-amino-1-(5-phospho-D-ribosyl)imidazole-4-carboxamide (10-formyl THF route): step 1/1. The protein operates within purine metabolism; IMP biosynthesis via de novo pathway; IMP from 5-formamido-1-(5-phospho-D-ribosyl)imidazole-4-carboxamide: step 1/1. The polypeptide is Bifunctional purine biosynthesis protein PurH (Alteromonas mediterranea (strain DSM 17117 / CIP 110805 / LMG 28347 / Deep ecotype)).